A 244-amino-acid chain; its full sequence is 5'-deoxynucleotidase (244 aa).

The enzyme catalyses a 2'-deoxyribonucleoside 5'-phosphate + H2O = a 2'-deoxyribonucleoside + phosphate. Following host DNA degradation, is responsible for the degradation of 5'-dNMP's to deoxynucleosides that can be further excreted. Active on deoxynucleoside 5'-monophosphates but not active as a phosphatase on ribonucleotides, deoxynucleoside 5'-triphosphates, deoxynucleoside 3'-monophosphates, or deoxyoligonucleotides. This Escherichia coli (Enterobacteria phage T5) protein is 5'-deoxynucleotidase (dmp).